The sequence spans 610 residues: Transducer of Cdc42-dependent actin assembly protein 2 homolog (610 aa).

Positions M1–D267 constitute an F-BAR domain. The tract at residues A283–S315 is disordered. Basic and acidic residues predominate over residues G291–D302. One can recognise an REM-1 domain in the interval S352 to M429. A coiled-coil region spans residues A355–R385. Disordered stretches follow at residues E436–N487 and L499–E519. Positions G437 to D449 are enriched in basic and acidic residues. Low complexity predominate over residues S453–S464. A compositionally biased stretch (polar residues) spans A475 to N487. Positions S501–P513 are enriched in low complexity. In terms of domain architecture, SH3 spans E547–Q610.

This sequence belongs to the FNBP1 family. In terms of assembly, interacts (via SH3 domain) with wsp-1 and abi-1. Interacts with cdc-42 and (via SH3 domain) with wve-1.

It localises to the cell junction. Its subcellular location is the cell membrane. The protein resides in the cytoplasmic vesicle. It is found in the cytoplasm. The protein localises to the recycling endosome. Its function is as follows. Plays a role in protein trafficking, actin organization and embryonic morphogenesis. Potentially acts as a cdc-42 effector. May play a role in egg laying. Together with toca-1, is required for protein trafficking regulating yolk protein clathrin-mediated endocytosis by oocytes during oogenesis and retrograde recycling and the sorting of recycling endosome cargo proteins such as mig-14. Also, together with toca-2, controls the distribution of actin at cell junctions. This is Transducer of Cdc42-dependent actin assembly protein 2 homolog from Caenorhabditis elegans.